A 150-amino-acid chain; its full sequence is MATVYDVPGDLLVERVAKALKEVPEIKPPEWAPFVKTGRHKERLPEQEDWWYYRVASVFRKVYIDGPVGIERLRTWYGGRKNRGHAPEHFYKAGGSIIRKALQQLEAAGFVQKVPGEGRIVTPKGQSFLDKIATELKKELEEQIPELKKY.

Belongs to the eukaryotic ribosomal protein eS19 family. Part of the 30S ribosomal subunit.

May be involved in maturation of the 30S ribosomal subunit. This chain is Small ribosomal subunit protein eS19, found in Thermococcus kodakarensis (strain ATCC BAA-918 / JCM 12380 / KOD1) (Pyrococcus kodakaraensis (strain KOD1)).